Here is a 440-residue protein sequence, read N- to C-terminus: Thymidine phosphorylase (440 aa).

Belongs to the thymidine/pyrimidine-nucleoside phosphorylase family. As to quaternary structure, homodimer.

It catalyses the reaction thymidine + phosphate = 2-deoxy-alpha-D-ribose 1-phosphate + thymine. It participates in pyrimidine metabolism; dTMP biosynthesis via salvage pathway; dTMP from thymine: step 1/2. Functionally, the enzymes which catalyze the reversible phosphorolysis of pyrimidine nucleosides are involved in the degradation of these compounds and in their utilization as carbon and energy sources, or in the rescue of pyrimidine bases for nucleotide synthesis. The chain is Thymidine phosphorylase from Proteus mirabilis (strain HI4320).